The primary structure comprises 480 residues: MEISERARARLAVLNAHLTVSEPNQVLPAIEPWCTSAHITAAPHGSLKGNLKIVDERTGNEYQVPVSEHGTVKTVDLKKITTGKDDKGLNLYDPGYLNTAPVRSSISYIDGDEGILRYRGYPVEELAEKSTYTEVTYLLIYGNLPSQRQLADWEFAISQNSAVPQGVLDMIQSMPNDVHPVGALVTAMSALSIFYPDANPSLMGLGVYKSKQVRDKQIVRVLGQAPTIAAAAYLRKAGKPPVQPLSNLSYSENFLYMVESMGDRSYKPNPRLARVLDILFILQAEHEMNCSTAAARHLSSSGGDVYTAVSGGVGAIYGPLHGGAVEATINMLSEIGTVENIPEFIESVKNKKRRLSGFGHRIYKNYDPRGKVVKKLADEVFSILGRDPLVEVGDALEKAALSDEYFVKRKLYPNVDFYSGLINRAMGIPSSFTAVSRIAGYLSHWRESLDDPDTKIMRPQQVYTGAGIRHYETVRERTKL.

Catalysis depends on residues His-321, His-360, and Asp-416.

Belongs to the citrate synthase family. Expressed only in siliques. Not expressed in flower, stem, cauline leaf, young leaf, mature leaf and senescent leaf.

It localises to the peroxisome. It catalyses the reaction oxaloacetate + acetyl-CoA + H2O = citrate + CoA + H(+). It participates in carbohydrate metabolism; tricarboxylic acid cycle; isocitrate from oxaloacetate: step 1/2. The polypeptide is Citrate synthase 1, peroxisomal (CSY1) (Arabidopsis thaliana (Mouse-ear cress)).